We begin with the raw amino-acid sequence, 1486 residues long: Chromosome partition protein MukB (1486 aa).

Position 34–41 (34–41 (GGNGAGKS)) interacts with ATP. Coiled coils occupy residues 326-418 (LEAD…QYNQ), 444-480 (LETF…QAYQ), and 509-603 (RHLA…RAPV). The flexible hinge stretch occupies residues 666 to 783 (PGGSEDQRLN…EVPLFGRAAR (118 aa)). Coiled-coil stretches lie at residues 835-923 (EAEI…AKLE), 977-1115 (EMLS…TAKA), and 1209-1266 (VEAI…QNVS).

This sequence belongs to the SMC family. MukB subfamily. As to quaternary structure, homodimerization via its hinge domain. Binds to DNA via its C-terminal region. Interacts, and probably forms a ternary complex, with MukE and MukF via its C-terminal region. The complex formation is stimulated by calcium or magnesium. Interacts with tubulin-related protein FtsZ.

It is found in the cytoplasm. It localises to the nucleoid. In terms of biological role, plays a central role in chromosome condensation, segregation and cell cycle progression. Functions as a homodimer, which is essential for chromosome partition. Involved in negative DNA supercoiling in vivo, and by this means organize and compact chromosomes. May achieve or facilitate chromosome segregation by condensation DNA from both sides of a centrally located replisome during cell division. The polypeptide is Chromosome partition protein MukB (Escherichia coli O17:K52:H18 (strain UMN026 / ExPEC)).